We begin with the raw amino-acid sequence, 390 residues long: uncharacterized protein (390 aa).

The protein belongs to the peptidase M24 family.

This is an uncharacterized protein from Sinorhizobium fredii (strain NBRC 101917 / NGR234).